A 105-amino-acid chain; its full sequence is Large ribosomal subunit protein bL21 (105 aa).

The protein belongs to the bacterial ribosomal protein bL21 family. Part of the 50S ribosomal subunit. Contacts protein L20.

Its function is as follows. This protein binds to 23S rRNA in the presence of protein L20. The polypeptide is Large ribosomal subunit protein bL21 (Rickettsia peacockii (strain Rustic)).